The primary structure comprises 126 residues: Holo-[acyl-carrier-protein] synthase (126 aa).

The Mg(2+) site is built by aspartate 9 and glutamate 58.

This sequence belongs to the P-Pant transferase superfamily. AcpS family. The cofactor is Mg(2+).

It localises to the cytoplasm. It catalyses the reaction apo-[ACP] + CoA = holo-[ACP] + adenosine 3',5'-bisphosphate + H(+). Its function is as follows. Transfers the 4'-phosphopantetheine moiety from coenzyme A to a Ser of acyl-carrier-protein. The polypeptide is Holo-[acyl-carrier-protein] synthase (Salmonella agona (strain SL483)).